The primary structure comprises 38 residues: Large ribosomal subunit protein bL36A (38 aa).

Belongs to the bacterial ribosomal protein bL36 family.

This Pseudomonas aeruginosa (strain UCBPP-PA14) protein is Large ribosomal subunit protein bL36A.